The sequence spans 318 residues: Probable mitochondrial 2-oxoglutarate/malate carrier protein (318 aa).

3 Solcar repeats span residues 22–111 (QSQL…IKDI), 119–210 (LPFT…TKQL), and 219–309 (DDIK…LNIL). 6 consecutive transmembrane segments (helical) span residues 28–48 (FVIGGLAGMLSSAFTHPIDSL), 79–99 (GFFTLYKGLSASLLRQATYTT), 125–145 (IMVGMLSGAGGAIVGTPADLT), 185–205 (GCSPNLIRAMFMTAGQVSSYD), 225–245 (LIASTTAAFVAAVATSPLDVI), and 281–301 (FYKGFNPYFMRLGPQTILTFI).

This sequence belongs to the mitochondrial carrier (TC 2.A.29) family.

Its subcellular location is the mitochondrion inner membrane. Its function is as follows. Mitochondrial solute carriers shuttle metabolites, nucleotides, and cofactors through the mitochondrial inner membrane. Catalyzes the transport of 2-oxoglutarate across the inner mitochondrial membrane in an electroneutral exchange for malate or other dicarboxylic acids, and plays an important role in several metabolic processes, including the malate-aspartate shuttle, the oxoglutarate/isocitrate shuttle, in gluconeogenesis from lactate, and in nitrogen metabolism. This is Probable mitochondrial 2-oxoglutarate/malate carrier protein (ucpC) from Dictyostelium discoideum (Social amoeba).